The sequence spans 159 residues: Ribosome maturation factor RimP (159 aa).

This sequence belongs to the RimP family.

It localises to the cytoplasm. In terms of biological role, required for maturation of 30S ribosomal subunits. This chain is Ribosome maturation factor RimP, found in Streptococcus pneumoniae serotype 2 (strain D39 / NCTC 7466).